A 591-amino-acid chain; its full sequence is Formate--tetrahydrofolate ligase (591 aa).

74 to 81 provides a ligand contact to ATP; sequence TPLGEGKS.

Belongs to the formate--tetrahydrofolate ligase family.

It carries out the reaction (6S)-5,6,7,8-tetrahydrofolate + formate + ATP = (6R)-10-formyltetrahydrofolate + ADP + phosphate. It functions in the pathway one-carbon metabolism; tetrahydrofolate interconversion. In Desulforapulum autotrophicum (strain ATCC 43914 / DSM 3382 / VKM B-1955 / HRM2) (Desulfobacterium autotrophicum), this protein is Formate--tetrahydrofolate ligase.